The primary structure comprises 425 residues: Serine hydroxymethyltransferase (425 aa).

Residues Leu124 and 128 to 130 (GHL) contribute to the (6S)-5,6,7,8-tetrahydrofolate site. Lys233 carries the N6-(pyridoxal phosphate)lysine modification.

Belongs to the SHMT family. Homodimer. It depends on pyridoxal 5'-phosphate as a cofactor.

The protein resides in the cytoplasm. The catalysed reaction is (6R)-5,10-methylene-5,6,7,8-tetrahydrofolate + glycine + H2O = (6S)-5,6,7,8-tetrahydrofolate + L-serine. It functions in the pathway one-carbon metabolism; tetrahydrofolate interconversion. The protein operates within amino-acid biosynthesis; glycine biosynthesis; glycine from L-serine: step 1/1. In terms of biological role, catalyzes the reversible interconversion of serine and glycine with tetrahydrofolate (THF) serving as the one-carbon carrier. This reaction serves as the major source of one-carbon groups required for the biosynthesis of purines, thymidylate, methionine, and other important biomolecules. Also exhibits THF-independent aldolase activity toward beta-hydroxyamino acids, producing glycine and aldehydes, via a retro-aldol mechanism. This is Serine hydroxymethyltransferase from Clavibacter michiganensis subsp. michiganensis (strain NCPPB 382).